The sequence spans 224 residues: 7-cyano-7-deazaguanine synthase (224 aa).

9 to 19 (LSGGLDSATVL) contacts ATP. Positions 189, 199, 202, and 205 each coordinate Zn(2+).

It belongs to the QueC family. The cofactor is Zn(2+).

It carries out the reaction 7-carboxy-7-deazaguanine + NH4(+) + ATP = 7-cyano-7-deazaguanine + ADP + phosphate + H2O + H(+). Its pathway is purine metabolism; 7-cyano-7-deazaguanine biosynthesis. Its function is as follows. Catalyzes the ATP-dependent conversion of 7-carboxy-7-deazaguanine (CDG) to 7-cyano-7-deazaguanine (preQ(0)). In Ralstonia pickettii (strain 12J), this protein is 7-cyano-7-deazaguanine synthase.